We begin with the raw amino-acid sequence, 509 residues long: Transmembrane protein 104 homolog (509 aa).

Over 1-19 (MPRLVNGREAAPTYSNLVG) the chain is Cytoplasmic. Residues 20 to 40 (FIFIFNLIVGTGALTLPGVFA) form a helical membrane-spanning segment. The Extracellular segment spans residues 41–45 (RAGWM). A helical membrane pass occupies residues 46–66 (LSLIVIVLLAIISYMTVTFII). Residues 67-151 (EAMACANAIR…ATLFFNEFGR (85 aa)) lie on the Cytoplasmic side of the membrane. A helical transmembrane segment spans residues 152–172 (VMFYLCLIVYLYGDLSIYSAA). Over 173 to 218 (VARSLRDVVCDQTNGTDTNNLMYWPGDFENNTSLACWKEHTISRLN) the chain is Extracellular. N-linked (GlcNAc...) asparagine glycans are attached at residues asparagine 186, asparagine 202, and asparagine 203. The chain crosses the membrane as a helical span at residues 219–239 (MYRVLLIGFTLIFGPFVYFNV). The Cytoplasmic segment spans residues 240–248 (QKTKYLQML). A helical membrane pass occupies residues 249–269 (TAAFRWMAFTLMICISLKLLI). Over 270–277 (SRGAKGHP) the chain is Extracellular. The chain crosses the membrane as a helical span at residues 278 to 298 (ATFNVYGIPSLFGACVYSFMC). At 299–320 (HHSLPSLLAPIRHKSMVSKILS) the chain is on the cytoplasmic side. A helical transmembrane segment spans residues 321–341 (IDYIIICAFYILLAMTGIFAF). The Extracellular segment spans residues 342–361 (ERIEDLYTLDFLPYDVAYVD). Residues 362-382 (FWSGLLICIDYFLALFPIFTL) form a helical membrane-spanning segment. Residues 383–411 (STSFPIVAITLKNNLQSLFLDMSQYESYS) are Cytoplasmic-facing. A helical transmembrane segment spans residues 412 to 432 (VILRLCFPLLAIIPPFCITYF). Topologically, residues 433–439 (TESLSSL) are extracellular. A helical transmembrane segment spans residues 440-460 (VAFTGTYAGTGIQYIIPVFLV). At 461 to 487 (YFARRTCSELLGSGVVNRFKSPFKSSA) the chain is on the cytoplasmic side. A helical membrane pass occupies residues 488–508 (WLVFVFIWSILCVCLVSINLF). Position 509 (serine 509) is a topological domain, extracellular.

This sequence belongs to the TMEM104 family.

The protein resides in the membrane. This Drosophila melanogaster (Fruit fly) protein is Transmembrane protein 104 homolog.